The following is a 483-amino-acid chain: tRNA sulfurtransferase (483 aa).

The region spanning 61–165 is the THUMP domain; that stretch reads PLVADALTLI…NDRLLLITER (105 aa). Residues 183–184, K265, G287, and Q296 contribute to the ATP site; that span reads LI. An intrachain disulfide couples C344 to C457. A Rhodanese domain is found at 405-483; that stretch reads LGSGDVVLDI…GFQNVKVYRP (79 aa). The Cysteine persulfide intermediate role is filled by C457.

The protein belongs to the ThiI family.

The protein resides in the cytoplasm. It catalyses the reaction [ThiI sulfur-carrier protein]-S-sulfanyl-L-cysteine + a uridine in tRNA + 2 reduced [2Fe-2S]-[ferredoxin] + ATP + H(+) = [ThiI sulfur-carrier protein]-L-cysteine + a 4-thiouridine in tRNA + 2 oxidized [2Fe-2S]-[ferredoxin] + AMP + diphosphate. The catalysed reaction is [ThiS sulfur-carrier protein]-C-terminal Gly-Gly-AMP + S-sulfanyl-L-cysteinyl-[cysteine desulfurase] + AH2 = [ThiS sulfur-carrier protein]-C-terminal-Gly-aminoethanethioate + L-cysteinyl-[cysteine desulfurase] + A + AMP + 2 H(+). The protein operates within cofactor biosynthesis; thiamine diphosphate biosynthesis. Its function is as follows. Catalyzes the ATP-dependent transfer of a sulfur to tRNA to produce 4-thiouridine in position 8 of tRNAs, which functions as a near-UV photosensor. Also catalyzes the transfer of sulfur to the sulfur carrier protein ThiS, forming ThiS-thiocarboxylate. This is a step in the synthesis of thiazole, in the thiamine biosynthesis pathway. The sulfur is donated as persulfide by IscS. The sequence is that of tRNA sulfurtransferase from Sodalis glossinidius (strain morsitans).